Reading from the N-terminus, the 345-residue chain is Phenylalanine--tRNA ligase alpha subunit (345 aa).

Residue glutamate 253 participates in Mg(2+) binding.

The protein belongs to the class-II aminoacyl-tRNA synthetase family. Phe-tRNA synthetase alpha subunit type 1 subfamily. Tetramer of two alpha and two beta subunits. Mg(2+) serves as cofactor.

The protein resides in the cytoplasm. It carries out the reaction tRNA(Phe) + L-phenylalanine + ATP = L-phenylalanyl-tRNA(Phe) + AMP + diphosphate + H(+). This is Phenylalanine--tRNA ligase alpha subunit from Nitratidesulfovibrio vulgaris (strain DP4) (Desulfovibrio vulgaris).